A 208-amino-acid chain; its full sequence is Thymidylate kinase (208 aa).

Position 10 to 17 (Gly-10 to Thr-17) interacts with ATP.

The protein belongs to the thymidylate kinase family.

The enzyme catalyses dTMP + ATP = dTDP + ADP. In terms of biological role, phosphorylation of dTMP to form dTDP in both de novo and salvage pathways of dTTP synthesis. In Bacillus cereus (strain AH187), this protein is Thymidylate kinase.